The sequence spans 702 residues: Ribosomal RNA large subunit methyltransferase K/L (702 aa).

One can recognise a THUMP domain in the interval 43-154 (LVYQSLMWSR…KETASIALDL (112 aa)).

The protein belongs to the methyltransferase superfamily. RlmKL family.

Its subcellular location is the cytoplasm. The catalysed reaction is guanosine(2445) in 23S rRNA + S-adenosyl-L-methionine = N(2)-methylguanosine(2445) in 23S rRNA + S-adenosyl-L-homocysteine + H(+). It carries out the reaction guanosine(2069) in 23S rRNA + S-adenosyl-L-methionine = N(2)-methylguanosine(2069) in 23S rRNA + S-adenosyl-L-homocysteine + H(+). In terms of biological role, specifically methylates the guanine in position 2445 (m2G2445) and the guanine in position 2069 (m7G2069) of 23S rRNA. This is Ribosomal RNA large subunit methyltransferase K/L from Shigella boydii serotype 4 (strain Sb227).